The sequence spans 324 residues: Type II restriction enzyme AplI (324 aa).

Belongs to the BsuBI/PstI type II restriction endonuclease family. Mg(2+) serves as cofactor.

It carries out the reaction Endonucleolytic cleavage of DNA to give specific double-stranded fragments with terminal 5'-phosphates.. Its activity is regulated as follows. Activated by K(+) and Na(+) ions, whereas NH(4)(+) ions appear to inhibit endonuclease activity. Its function is as follows. A P subtype restriction enzyme that recognizes the double-stranded sequence 5'-CTGCAG-3' and cleaves after A-5. This is Type II restriction enzyme AplI (aplIR) from Arthrospira platensis (strain NIES-39 / UTEX 3086 / IAM M-135) (Spirulina platensis).